The sequence spans 368 residues: Protein mab-21-like (368 aa).

It belongs to the mab-21 family.

This is Protein mab-21-like from Drosophila melanogaster (Fruit fly).